The sequence spans 422 residues: Glutamate-1-semialdehyde 2,1-aminomutase (422 aa).

K265 carries the post-translational modification N6-(pyridoxal phosphate)lysine.

It belongs to the class-III pyridoxal-phosphate-dependent aminotransferase family. HemL subfamily. The cofactor is pyridoxal 5'-phosphate.

It is found in the cytoplasm. The enzyme catalyses (S)-4-amino-5-oxopentanoate = 5-aminolevulinate. It functions in the pathway porphyrin-containing compound metabolism; protoporphyrin-IX biosynthesis; 5-aminolevulinate from L-glutamyl-tRNA(Glu): step 2/2. The sequence is that of Glutamate-1-semialdehyde 2,1-aminomutase from Methanococcoides burtonii (strain DSM 6242 / NBRC 107633 / OCM 468 / ACE-M).